The sequence spans 128 residues: Sirohydrochlorin cobaltochelatase (128 aa).

His-9 (proton acceptor) is an active-site residue. His-9 serves as a coordination point for Co(2+). Residues Lys-43 and 68 to 73 (FATGTH) contribute to the substrate site. His-73 lines the Co(2+) pocket.

The protein belongs to the CbiX family. CbiXS subfamily. Homotetramer; dimer of dimers.

The enzyme catalyses Co-sirohydrochlorin + 2 H(+) = sirohydrochlorin + Co(2+). Its pathway is cofactor biosynthesis; adenosylcobalamin biosynthesis; cob(II)yrinate a,c-diamide from sirohydrochlorin (anaerobic route): step 1/10. Catalyzes the insertion of Co(2+) into sirohydrochlorin as part of the anaerobic pathway to cobalamin biosynthesis. The sequence is that of Sirohydrochlorin cobaltochelatase from Saccharolobus islandicus (strain Y.G.57.14 / Yellowstone #1) (Sulfolobus islandicus).